A 508-amino-acid polypeptide reads, in one-letter code: WD repeat-containing protein DDB_G0290555 (508 aa).

4 WD repeats span residues 32-74, 159-198, 252-292, and 295-334; these read TSEL…LIGE, NVATNLSGFAMNPSNDKFAFGGKDVNLTIWDLEKQVKTYS, FSKH…QVGS, and DSAGSVKDIAIHPTLPLLATVGLDRHLRVYNLDNRKMLHK. The segment at 368-508 is disordered; sequence ENKNRINNDD…KKFAGLKKRK (141 aa). Residues 399–435 show a composition bias toward acidic residues; the sequence is MDSDDDIEDGDDNDVEFPMEADSDDSDFDLGNSDDDN. Residues 436 to 446 are compositionally biased toward basic and acidic residues; that stretch reads ISVKKENKGDS. Residues 447-456 show a composition bias toward acidic residues; that stretch reads DDSDDDSDED. The span at 471–493 shows a compositional bias: low complexity; it reads NNNNNNNKGKNNKGKNNSSTKKT. Residues 497–508 show a composition bias toward basic residues; that stretch reads LKKKFAGLKKRK.

In Dictyostelium discoideum (Social amoeba), this protein is WD repeat-containing protein DDB_G0290555.